The primary structure comprises 415 residues: Vascular endothelial growth factor C (415 aa).

Residues 1 to 31 (MHLLCFLSLACSLLAAALIPSPREAPATVAA) form the signal peptide. Residues 32–107 (FESGLGFSEA…RTGDSVKFAA (76 aa)) constitute a propeptide that is removed on maturation. 3 cysteine pairs are disulfide-bonded: Cys127/Cys169, Cys158/Cys205, and Cys162/Cys207. 3 N-linked (GlcNAc...) asparagine glycosylation sites follow: Asn171, Asn201, and Asn236. A propeptide spanning residues 224-415 (SLPATLPQCQ…PSYWKRPHLN (192 aa)) is cleaved from the precursor. Repeat copies occupy residues 276–291 (CGPN…QCVC), 300–315 (CGPH…QCVC), 324–339 (CGAN…QCVC), and 343–358 (CPRN…ACEC). The 4 X 16 AA repeats of C-X(10)-C-X-C-X(1,3)-C stretch occupies residues 276–358 (CGPNKELDED…LNPGKCACEC (83 aa)).

The protein belongs to the PDGF/VEGF growth factor family. As to quaternary structure, homodimer; non-covalent and antiparallel. Interacts with FLT4/VEGFR3; the interaction is required for FLT4/VEGFR3 homodimarization and activation. Undergoes a complex proteolytic maturation which generates a variety of processed secreted forms with increased activity toward VEGFR-3, but only the fully processed form could activate VEGFR-2. VEGF-C first form an antiparallel homodimer linked by disulfide bonds. Before secretion, a cleavage occurs between Arg-223 and Ser-224 producing a heterotetramer. The next extracellular step of the processing removes the N-terminal propeptide. Finally the mature VEGF-C is composed mostly of two VEGF homology domains (VHDs) bound by non-covalent interactions. Expressed in adult heart, brain, spleen, lung, liver, skeletal muscle, kidney, testis and intestine with higher levels in heart, brain and kidney. Isoform 4 levels are very low. Isoform 3 is mostly expressed in liver and has reduced expression level in other tissues. Isoform 2 is mostly expressed in brain and kidney, although a lower level expression in other tissues is also detectable.

Its subcellular location is the secreted. Functionally, growth factor active in angiogenesis, and endothelial cell growth, stimulating their proliferation and migration and also has effects on the permeability of blood vessels. May function in angiogenesis of the venous and lymphatic vascular systems during embryogenesis, and also in the maintenance of differentiated lymphatic endothelium in adults. Binds and activates KDR/VEGFR2 and FLT4/VEGFR3 receptors. The chain is Vascular endothelial growth factor C (Vegfc) from Mus musculus (Mouse).